The following is a 270-amino-acid chain: Tryptophan synthase alpha chain (270 aa).

Catalysis depends on proton acceptor residues Glu60 and Asp71.

Belongs to the TrpA family. Tetramer of two alpha and two beta chains.

The catalysed reaction is (1S,2R)-1-C-(indol-3-yl)glycerol 3-phosphate + L-serine = D-glyceraldehyde 3-phosphate + L-tryptophan + H2O. It functions in the pathway amino-acid biosynthesis; L-tryptophan biosynthesis; L-tryptophan from chorismate: step 5/5. Functionally, the alpha subunit is responsible for the aldol cleavage of indoleglycerol phosphate to indole and glyceraldehyde 3-phosphate. The polypeptide is Tryptophan synthase alpha chain (Deinococcus radiodurans (strain ATCC 13939 / DSM 20539 / JCM 16871 / CCUG 27074 / LMG 4051 / NBRC 15346 / NCIMB 9279 / VKM B-1422 / R1)).